The chain runs to 394 residues: Elongation factor Tu 2 (394 aa).

Residues 10–204 (KPHVNVGTIG…ALDTYIPEPE (195 aa)) form the tr-type G domain. Residues 19 to 26 (GHVDHGKT) form a G1 region. 19 to 26 (GHVDHGKT) contributes to the GTP binding site. Thr26 contributes to the Mg(2+) binding site. The segment at 60-64 (GITIS) is G2. Residues 81–84 (DCPG) are G3. GTP-binding positions include 81-85 (DCPGH) and 136-139 (NKCD). Residues 136–139 (NKCD) form a G4 region. Positions 174–176 (SAL) are G5.

The protein belongs to the TRAFAC class translation factor GTPase superfamily. Classic translation factor GTPase family. EF-Tu/EF-1A subfamily. As to quaternary structure, monomer.

It is found in the cytoplasm. It catalyses the reaction GTP + H2O = GDP + phosphate + H(+). Its function is as follows. GTP hydrolase that promotes the GTP-dependent binding of aminoacyl-tRNA to the A-site of ribosomes during protein biosynthesis. This Vibrio vulnificus (strain CMCP6) protein is Elongation factor Tu 2.